The following is a 419-amino-acid chain: Gamma-glutamyl phosphate reductase (419 aa).

It belongs to the gamma-glutamyl phosphate reductase family.

The protein localises to the cytoplasm. The catalysed reaction is L-glutamate 5-semialdehyde + phosphate + NADP(+) = L-glutamyl 5-phosphate + NADPH + H(+). It participates in amino-acid biosynthesis; L-proline biosynthesis; L-glutamate 5-semialdehyde from L-glutamate: step 2/2. Catalyzes the NADPH-dependent reduction of L-glutamate 5-phosphate into L-glutamate 5-semialdehyde and phosphate. The product spontaneously undergoes cyclization to form 1-pyrroline-5-carboxylate. This Caldicellulosiruptor saccharolyticus (strain ATCC 43494 / DSM 8903 / Tp8T 6331) protein is Gamma-glutamyl phosphate reductase.